The following is a 273-amino-acid chain: NH(3)-dependent NAD(+) synthetase (273 aa).

46–53 is a binding site for ATP; sequence GISGGQDS. Residue Asp-52 participates in Mg(2+) binding. Arg-139 serves as a coordination point for deamido-NAD(+). Thr-159 is an ATP binding site. Glu-164 lines the Mg(2+) pocket. Deamido-NAD(+) is bound by residues Lys-172 and Asp-179. Lys-188 and Thr-210 together coordinate ATP. 259–260 serves as a coordination point for deamido-NAD(+); the sequence is HK.

It belongs to the NAD synthetase family. In terms of assembly, homodimer.

The catalysed reaction is deamido-NAD(+) + NH4(+) + ATP = AMP + diphosphate + NAD(+) + H(+). The protein operates within cofactor biosynthesis; NAD(+) biosynthesis; NAD(+) from deamido-NAD(+) (ammonia route): step 1/1. Its function is as follows. Catalyzes the ATP-dependent amidation of deamido-NAD to form NAD. Uses ammonia as a nitrogen source. This chain is NH(3)-dependent NAD(+) synthetase, found in Streptococcus thermophilus (strain ATCC BAA-250 / LMG 18311).